A 459-amino-acid chain; its full sequence is O-phospho-L-seryl-tRNA:Cys-tRNA synthase 1 (459 aa).

Pyridoxal 5'-phosphate is bound by residues 152–153, N257, and 280–282; these read AR and SGH. K283 bears the N6-(pyridoxal phosphate)lysine mark.

The protein belongs to the SepCysS family. In terms of assembly, homodimer. Interacts with SepRS. The cofactor is pyridoxal 5'-phosphate.

The catalysed reaction is O-phospho-L-seryl-tRNA(Cys) + hydrogen sulfide + H(+) = L-cysteinyl-tRNA(Cys) + phosphate. Converts O-phospho-L-seryl-tRNA(Cys) (Sep-tRNA(Cys)) to L-cysteinyl-tRNA(Cys) (Cys-tRNA(Cys)). The sequence is that of O-phospho-L-seryl-tRNA:Cys-tRNA synthase 1 from Methanococcoides burtonii (strain DSM 6242 / NBRC 107633 / OCM 468 / ACE-M).